The following is a 549-amino-acid chain: MSKPWGGIGAWADEAERADEEQAAEATATAADSQSFPSLKEAATAKSSKKKKKMTLSEFTKGAYTAPSSAGLTREQMLQLPTGPRQRSEDEMQPGRLGGGFSSYGGGRSSGPPGRMSRDREDSDGSWGGGGGGRRSYGGFDDDQRGSNSRVSDFPQVSRADEDDDWGKGKKSLPSFDQGRQGSRYGGGGGSFGGGGGGGAGSYGGGGAGAGSGGGGGFSKADEVDNWAAGKAKSSTFGSGFRESGPEPDRWARGVLPSGGGVQEERRRLVFEPRKADTEVSETPTAVKTSKPSPFGAARPREQVLAEKGLDWKKLDSDIEAKKGQTSRPSSAQSSRPSSAQSNRSESSALNNVENVVKPRPKVNPFGDAKPREVLLEEQGKDWRKIDSELEHRRVDRPETEGERMLKEEIEELRKKLEKEAAIAPESKESQQESDSNHQNLPDLIREKEKNLDLLIRELDDKVRFRPRAVERPGSSASRGGSYSERPHSRAGSIDESRSVESMERPRSHGTGDNWPRPVDDRRNFQGSKERGFFNNRNFDRSSSAREGW.

Disordered regions lie at residues 1-446 (MSKP…DLIR) and 465-549 (FRPR…REGW). Positions 24-46 (AEATATAADSQSFPSLKEAATAK) are enriched in low complexity. Gly residues-rich tracts occupy residues 96 to 109 (RLGG…GGRS) and 126 to 136 (SWGGGGGGRRS). Positions 169–176 (GKKSLPSF) match the Nuclear localization signal 1 motif. A compositionally biased stretch (gly residues) spans 184-218 (RYGGGGGSFGGGGGGGAGSYGGGGAGAGSGGGGGF). The Nuclear localization signal 2 motif lies at 234–241 (SSTFGSGF). Over residues 263-278 (QEERRRLVFEPRKADT) the composition is skewed to basic and acidic residues. Residues 281–292 (SETPTAVKTSKP) are compositionally biased toward polar residues. Over residues 299–323 (RPREQVLAEKGLDWKKLDSDIEAKK) the composition is skewed to basic and acidic residues. The segment covering 327-349 (SRPSSAQSSRPSSAQSNRSESSA) has biased composition (low complexity). Basic and acidic residues-rich tracts occupy residues 369–431 (AKPR…KESQ), 485–507 (ERPH…ERPR), and 518–549 (PVDD…REGW).

Belongs to the eIF-4 subunit B family. Homodimer. Nonspherical monomer. mRNA-discriminating component of initiation complexes. In terms of processing, phosphorylated.

It is found in the nucleus. Functionally, promotes the eIF4F and eIF4A RNA-dependent ATP-hydrolysis activity with different efficiency depending on mRNAs, thus providing mRNA discrimination during initiation of translation. In Arabidopsis thaliana (Mouse-ear cress), this protein is Eukaryotic translation initiation factor 4B2.